The sequence spans 87 residues: uncharacterized protein (87 aa).

The chain crosses the membrane as a helical span at residues 29–49 (ILWMIIFVVIIAVIIYILISP).

It localises to the membrane. This is an uncharacterized protein from Methanocaldococcus jannaschii (strain ATCC 43067 / DSM 2661 / JAL-1 / JCM 10045 / NBRC 100440) (Methanococcus jannaschii).